The following is a 274-amino-acid chain: Large ribosomal subunit protein uL2cz/uL2cy (274 aa).

Positions 224–274 are disordered; sequence NPVDHPHGGGEGRAPIGRKKPATPWGYPALGRRSRKRNKYSDNLILRRRSK.

It belongs to the universal ribosomal protein uL2 family. As to quaternary structure, part of the 50S ribosomal subunit.

It localises to the plastid. Its subcellular location is the chloroplast. In Carica papaya (Papaya), this protein is Large ribosomal subunit protein uL2cz/uL2cy (rpl2-A).